The following is a 391-amino-acid chain: Cystathionine beta-lyase MetC (391 aa).

Lys-196 carries the post-translational modification N6-(pyridoxal phosphate)lysine.

This sequence belongs to the trans-sulfuration enzymes family. As to quaternary structure, homotetramer. It depends on pyridoxal 5'-phosphate as a cofactor.

It catalyses the reaction L,L-cystathionine + H2O = L-homocysteine + pyruvate + NH4(+). The enzyme catalyses an S-substituted L-cysteine + H2O = a thiol + pyruvate + NH4(+). It participates in amino-acid biosynthesis; L-methionine biosynthesis via de novo pathway; L-homocysteine from L-cystathionine: step 1/1. Cystathionine beta-lyase activity is inhibited by sweat components such as glycine, serine and ammonium sulfate. Inhibited by cystathionine at a concentration higher than 6 mM. Catalyzes the transformation of cystathionine into homocysteine. Can also catalyze, at low levels, the conversion of cystathionine into methionine and the conversion of methionine into methanethiol. This Staphylococcus haemolyticus (strain JCSC1435) protein is Cystathionine beta-lyase MetC.